We begin with the raw amino-acid sequence, 494 residues long: Aspartyl/glutamyl-tRNA(Asn/Gln) amidotransferase subunit B (494 aa).

This sequence belongs to the GatB/GatE family. GatB subfamily. In terms of assembly, heterotrimer of A, B and C subunits.

The catalysed reaction is L-glutamyl-tRNA(Gln) + L-glutamine + ATP + H2O = L-glutaminyl-tRNA(Gln) + L-glutamate + ADP + phosphate + H(+). It carries out the reaction L-aspartyl-tRNA(Asn) + L-glutamine + ATP + H2O = L-asparaginyl-tRNA(Asn) + L-glutamate + ADP + phosphate + 2 H(+). Allows the formation of correctly charged Asn-tRNA(Asn) or Gln-tRNA(Gln) through the transamidation of misacylated Asp-tRNA(Asn) or Glu-tRNA(Gln) in organisms which lack either or both of asparaginyl-tRNA or glutaminyl-tRNA synthetases. The reaction takes place in the presence of glutamine and ATP through an activated phospho-Asp-tRNA(Asn) or phospho-Glu-tRNA(Gln). This Rhodopseudomonas palustris (strain BisB5) protein is Aspartyl/glutamyl-tRNA(Asn/Gln) amidotransferase subunit B.